Reading from the N-terminus, the 98-residue chain is Large ribosomal subunit protein uL23 (98 aa).

It belongs to the universal ribosomal protein uL23 family. In terms of assembly, part of the 50S ribosomal subunit. Contacts protein L29, and trigger factor when it is bound to the ribosome.

In terms of biological role, one of the early assembly proteins it binds 23S rRNA. One of the proteins that surrounds the polypeptide exit tunnel on the outside of the ribosome. Forms the main docking site for trigger factor binding to the ribosome. This Methylorubrum populi (strain ATCC BAA-705 / NCIMB 13946 / BJ001) (Methylobacterium populi) protein is Large ribosomal subunit protein uL23.